A 141-amino-acid chain; its full sequence is Large-conductance mechanosensitive channel (141 aa).

3 helical membrane passes run 17–37 (MDLA…ASIV), 40–60 (LIMP…LFIA), and 86–106 (GNFV…FIIV).

This sequence belongs to the MscL family. In terms of assembly, homopentamer.

It is found in the cell inner membrane. In terms of biological role, channel that opens in response to stretch forces in the membrane lipid bilayer. May participate in the regulation of osmotic pressure changes within the cell. In Thiobacillus denitrificans (strain ATCC 25259 / T1), this protein is Large-conductance mechanosensitive channel.